Here is a 259-residue protein sequence, read N- to C-terminus: Ribosomal RNA small subunit methyltransferase A (259 aa).

Asparagine 13, threonine 15, glycine 40, glutamate 61, aspartate 85, and asparagine 105 together coordinate S-adenosyl-L-methionine.

This sequence belongs to the class I-like SAM-binding methyltransferase superfamily. rRNA adenine N(6)-methyltransferase family. RsmA subfamily.

The protein resides in the cytoplasm. The catalysed reaction is adenosine(1518)/adenosine(1519) in 16S rRNA + 4 S-adenosyl-L-methionine = N(6)-dimethyladenosine(1518)/N(6)-dimethyladenosine(1519) in 16S rRNA + 4 S-adenosyl-L-homocysteine + 4 H(+). Functionally, specifically dimethylates two adjacent adenosines (A1518 and A1519) in the loop of a conserved hairpin near the 3'-end of 16S rRNA in the 30S particle. May play a critical role in biogenesis of 30S subunits. This chain is Ribosomal RNA small subunit methyltransferase A, found in Mycoplasma genitalium (strain ATCC 33530 / DSM 19775 / NCTC 10195 / G37) (Mycoplasmoides genitalium).